A 524-amino-acid polypeptide reads, in one-letter code: General transcription factor IIF subunit 1 (524 aa).

2 disordered regions span residues 56 to 76 (MYQE…RKQR) and 181 to 462 (RLKD…IQLT). Positions 242 to 257 (KPQKKVPAKGGKKKKR) are enriched in basic residues. Residues 262–289 (EALEDSDDGDFEGQEVDYMSDESSSDEE) show a composition bias toward acidic residues. Basic and acidic residues predominate over residues 290 to 307 (LPGKIKPAKEEEGPKGLD). 2 stretches are compositionally biased toward acidic residues: residues 308–327 (EQSE…EEGE) and 347–358 (SDESETSEDSDI). Residues 368 to 378 (QKKKTPPKKDK) are compositionally biased toward basic residues. Positions 381-397 (GSNSSSRGNSRPGTPSP) are enriched in low complexity. Residues 436-459 (PQNTSGKSTPQPQSGKSTPSSGDI) show a composition bias toward polar residues.

The protein belongs to the TFIIF alpha subunit family. In terms of assembly, heterodimer of an alpha and a beta subunit. Post-translationally, phosphorylated on Ser and other residues by TAF1 and casein kinase II-like kinases.

It is found in the nucleus. TFIIF is a general transcription initiation factor that binds to RNA polymerase II and helps to recruit it to the initiation complex in collaboration with TFIIB. It promotes transcription elongation. This Xenopus laevis (African clawed frog) protein is General transcription factor IIF subunit 1 (gtf2f1).